We begin with the raw amino-acid sequence, 600 residues long: UvrABC system protein C (600 aa).

In terms of domain architecture, GIY-YIG spans 16–94 (EKPGCYQYFD…IKEYQPRYNV (79 aa)). Residues 208–243 (HRLVRMYRDRMQAYSEELRFEEAQICKERIELLERY) enclose the UVR domain.

This sequence belongs to the UvrC family. As to quaternary structure, interacts with UvrB in an incision complex.

The protein resides in the cytoplasm. The UvrABC repair system catalyzes the recognition and processing of DNA lesions. UvrC both incises the 5' and 3' sides of the lesion. The N-terminal half is responsible for the 3' incision and the C-terminal half is responsible for the 5' incision. This Porphyromonas gingivalis (strain ATCC 33277 / DSM 20709 / CIP 103683 / JCM 12257 / NCTC 11834 / 2561) protein is UvrABC system protein C.